Here is a 294-residue protein sequence, read N- to C-terminus: uncharacterized protein (294 aa).

3 disordered regions span residues 1 to 30 (MKRQ…EVSH), 51 to 86 (ALSD…KKRP), and 250 to 294 (DELN…STST). Polar residues-rich tracts occupy residues 7-26 (QDSM…TPTK), 66-81 (PYSS…NSST), and 255-277 (PMNN…NLPT).

It is found in the nucleus. This is an uncharacterized protein from Schizosaccharomyces pombe (strain 972 / ATCC 24843) (Fission yeast).